The chain runs to 565 residues: O-fucosyltransferase 7 (565 aa).

A helical; Signal-anchor for type II membrane protein transmembrane segment spans residues 17 to 37 (VLIWAICVMTLLCFLTVHIYV). 5 N-linked (GlcNAc...) asparagine glycosylation sites follow: Asn-62, Asn-73, Asn-104, Asn-124, and Asn-190. 327–329 (HLR) lines the substrate pocket. Residue Asn-441 is glycosylated (N-linked (GlcNAc...) asparagine). The interval 515-565 (NEIHKTRQGSPRRRKGPASGTKGLERHRSEESFYENPLPDCLCQRDPSKAR) is disordered. Over residues 520 to 530 (TRQGSPRRRKG) the composition is skewed to basic residues.

It belongs to the glycosyltransferase GT106 family.

It is found in the membrane. It functions in the pathway glycan metabolism. The polypeptide is O-fucosyltransferase 7 (Arabidopsis thaliana (Mouse-ear cress)).